We begin with the raw amino-acid sequence, 253 residues long: Phosphoribosylaminoimidazole-succinocarboxamide synthase (253 aa).

It belongs to the SAICAR synthetase family.

The enzyme catalyses 5-amino-1-(5-phospho-D-ribosyl)imidazole-4-carboxylate + L-aspartate + ATP = (2S)-2-[5-amino-1-(5-phospho-beta-D-ribosyl)imidazole-4-carboxamido]succinate + ADP + phosphate + 2 H(+). Its pathway is purine metabolism; IMP biosynthesis via de novo pathway; 5-amino-1-(5-phospho-D-ribosyl)imidazole-4-carboxamide from 5-amino-1-(5-phospho-D-ribosyl)imidazole-4-carboxylate: step 1/2. In Roseobacter denitrificans (strain ATCC 33942 / OCh 114) (Erythrobacter sp. (strain OCh 114)), this protein is Phosphoribosylaminoimidazole-succinocarboxamide synthase.